A 449-amino-acid polypeptide reads, in one-letter code: Hyaluronidase-1 (449 aa).

The N-terminal stretch at 1 to 39 (MKPFSPEVSPDPCPATAAHLLRTYTLFLTLLELAQGCRG) is a signal peptide. Intrachain disulfides connect Cys-58/Cys-348 and Cys-222/Cys-236. Asn-85 and Asn-114 each carry an N-linked (GlcNAc...) asparagine glycan. Glu-146 (proton donor) is an active-site residue. 3 N-linked (GlcNAc...) asparagine glycosylation sites follow: Asn-231, Asn-252, and Asn-365. 3 disulfide bridges follow: Cys-373-Cys-384, Cys-378-Cys-433, and Cys-435-Cys-444. In terms of domain architecture, EGF-like spans 433–444 (CRCYRGWSGEWC).

It belongs to the glycosyl hydrolase 56 family.

It is found in the secreted. The protein resides in the lysosome. The enzyme catalyses Random hydrolysis of (1-&gt;4)-linkages between N-acetyl-beta-D-glucosamine and D-glucuronate residues in hyaluronate.. May have a role in promoting tumor progression. May block the TGFB1-enhanced cell growth. Overexpression of HYAL1 suppressed the growth rate of colon carcinoma cell tumors in an experimental model. This chain is Hyaluronidase-1 (Hyal1), found in Rattus norvegicus (Rat).